Here is a 221-residue protein sequence, read N- to C-terminus: Ribosomal RNA small subunit methyltransferase G (221 aa).

S-adenosyl-L-methionine-binding positions include G90, L95, 141 to 142, and R154; that span reads VE.

Belongs to the methyltransferase superfamily. RNA methyltransferase RsmG family.

It is found in the cytoplasm. The enzyme catalyses guanosine(527) in 16S rRNA + S-adenosyl-L-methionine = N(7)-methylguanosine(527) in 16S rRNA + S-adenosyl-L-homocysteine. Its function is as follows. Specifically methylates the N7 position of guanine in position 527 of 16S rRNA. The sequence is that of Ribosomal RNA small subunit methyltransferase G from Polaromonas naphthalenivorans (strain CJ2).